The primary structure comprises 222 residues: Putative N-acetylmannosamine-6-phosphate 2-epimerase (222 aa).

This sequence belongs to the NanE family.

It catalyses the reaction an N-acyl-D-glucosamine 6-phosphate = an N-acyl-D-mannosamine 6-phosphate. Its pathway is amino-sugar metabolism; N-acetylneuraminate degradation; D-fructose 6-phosphate from N-acetylneuraminate: step 3/5. Its function is as follows. Converts N-acetylmannosamine-6-phosphate (ManNAc-6-P) to N-acetylglucosamine-6-phosphate (GlcNAc-6-P). The polypeptide is Putative N-acetylmannosamine-6-phosphate 2-epimerase (Staphylococcus aureus (strain bovine RF122 / ET3-1)).